A 137-amino-acid chain; its full sequence is 2-iminobutanoate/2-iminopropanoate deaminase (137 aa).

S2 bears the N-acetylserine mark. Residues K13 and K67 each carry the N6-succinyllysine modification. T74 carries the phosphothreonine modification. Position 136 is a phosphoserine (S136).

In terms of assembly, homotrimer. Interacts with YTHDF2. In terms of tissue distribution, expressed by various malignant neoplasms.

The protein resides in the cytoplasm. The protein localises to the nucleus. Its subcellular location is the peroxisome. It is found in the mitochondrion. The enzyme catalyses 2-iminobutanoate + H2O = 2-oxobutanoate + NH4(+). It catalyses the reaction 2-iminopropanoate + H2O = pyruvate + NH4(+). Its function is as follows. Catalyzes the hydrolytic deamination of enamine/imine intermediates that form during the course of normal metabolism. May facilitate the release of ammonia from these potentially toxic reactive metabolites, reducing their impact on cellular components. It may act on enamine/imine intermediates formed by several types of pyridoxal-5'-phosphate-dependent dehydratases including L-threonine dehydratase. Functionally, also promotes endoribonucleolytic cleavage of some transcripts by promoting recruitment of the ribonuclease P/MRP complex. Acts by bridging YTHDF2 and the ribonuclease P/MRP complex. RIDA/HRSP12 binds to N6-methyladenosine (m6A)-containing mRNAs containing a 5'-GGUUC-3' motif: cooperative binding of RIDA/HRSP12 and YTHDF2 to such transcripts lead to recruitment of the ribonuclease P/MRP complex and subsequent endoribonucleolytic cleavage. The chain is 2-iminobutanoate/2-iminopropanoate deaminase from Capra hircus (Goat).